A 238-amino-acid chain; its full sequence is Alpha-tubulin N-acetyltransferase (238 aa).

Positions 1–196 (MEFDFDISQS…NNFVVFEDLF (196 aa)) constitute an N-acetyltransferase domain. Acetyl-CoA is bound by residues 129 to 142 (FYVH…GNGK) and 165 to 174 (SFKFLSFLQK).

The protein belongs to the acetyltransferase ATAT1 family.

It carries out the reaction L-lysyl-[alpha-tubulin] + acetyl-CoA = N(6)-acetyl-L-lysyl-[alpha-tubulin] + CoA + H(+). In terms of biological role, specifically acetylates 'Lys-40' in alpha-tubulin on the lumenal side of microtubules. Promotes microtubule destabilization and accelerates microtubule dynamics; this activity may be independent of acetylation activity. Acetylates alpha-tubulin with a slow enzymatic rate, due to a catalytic site that is not optimized for acetyl transfer. Enters the microtubule through each end and diffuses quickly throughout the lumen of microtubules. Acetylates only long/old microtubules because of its slow acetylation rate since it does not have time to act on dynamically unstable microtubules before the enzyme is released. This chain is Alpha-tubulin N-acetyltransferase, found in Trichoplax adhaerens (Trichoplax reptans).